Consider the following 274-residue polypeptide: Orotidine 5'-phosphate decarboxylase (274 aa).

Residues Asp40, 62 to 64 (KTH), 93 to 102 (DRKFVDIGNT), Tyr227, and Arg245 contribute to the substrate site. Lys95 acts as the Proton donor in catalysis.

The protein belongs to the OMP decarboxylase family.

It carries out the reaction orotidine 5'-phosphate + H(+) = UMP + CO2. It functions in the pathway pyrimidine metabolism; UMP biosynthesis via de novo pathway; UMP from orotate: step 2/2. In Coccidioides posadasii (strain RMSCC 757 / Silveira) (Valley fever fungus), this protein is Orotidine 5'-phosphate decarboxylase (URA3).